The sequence spans 125 residues: Small ribosomal subunit protein eS8 (125 aa).

It belongs to the eukaryotic ribosomal protein eS8 family. In terms of assembly, part of the 30S ribosomal subunit.

This chain is Small ribosomal subunit protein eS8, found in Methanosarcina barkeri (strain Fusaro / DSM 804).